Reading from the N-terminus, the 302-residue chain is MILLNNSERLLALFKSLARSIPESLKVYGSLFHINHGNPFNMEVLVDSWPEYQMVIIRPQKQEMTDDMDSYTNVYRVFSKDPQKSQEVLKNSEIINWKQKLQIQGFQESLGEGIRAAAFSNSVKVEHSRALLFVTEDILKLYATNKSKLGSWAETGHPDDELESETPNFKYAQLNVSYSGLVNDNWKLGMNKRSLRYIKRCLGALPAACMLGPEGVPVSWVTMDPSCEIGMGYSVEKYRRRGNGTRLIMRCMKYLCQKNIPFYGSVLEENQGVIRKTSALGFLEASCQWHQWNCYPQNLVPL.

It belongs to the glycine N-acyltransferase family.

It carries out the reaction an acyl-CoA + L-glutamine = an N(2)-acyl-L-glutamine + CoA + H(+). In terms of biological role, putative acyltransferase which transfers an acyl group to the N-terminus of glutamine. Can use phenylacetyl-CoA as an acyl donor. This Homo sapiens (Human) protein is Putative glycine N-acyltransferase-like protein 1B.